A 252-amino-acid polypeptide reads, in one-letter code: Hydroxyacylglutathione hydrolase (252 aa).

His-52, His-54, Asp-56, His-57, His-107, Asp-128, and His-166 together coordinate Zn(2+).

Belongs to the metallo-beta-lactamase superfamily. Glyoxalase II family. In terms of assembly, monomer. Zn(2+) is required as a cofactor.

The enzyme catalyses an S-(2-hydroxyacyl)glutathione + H2O = a 2-hydroxy carboxylate + glutathione + H(+). It functions in the pathway secondary metabolite metabolism; methylglyoxal degradation; (R)-lactate from methylglyoxal: step 2/2. Its function is as follows. Thiolesterase that catalyzes the hydrolysis of S-D-lactoyl-glutathione to form glutathione and D-lactic acid. The sequence is that of Hydroxyacylglutathione hydrolase from Neisseria meningitidis serogroup C / serotype 2a (strain ATCC 700532 / DSM 15464 / FAM18).